The chain runs to 2995 residues: Striated muscle preferentially expressed protein kinase (2995 aa).

An Ig-like 1 domain is found at 27 to 109 (PPVFLRKLKW…GEARTSAVLA (83 aa)). Residues Cys-50 and Cys-93 are joined by a disulfide bond. Disordered stretches follow at residues 250–272 (ITGS…KVSQ) and 384–467 (LTQT…NSKP). Polar residues predominate over residues 384 to 404 (LTQTDKQSSVSTESVPTQVIQ). Positions 454 to 464 (PPEMNENQENN) are enriched in low complexity. 2 consecutive Ig-like domains span residues 613–701 (PAES…EELI) and 714–802 (PLFT…AELY). Cys-639 and Cys-691 form a disulfide bridge. Residues 815–834 (SRLEKMPSIPEEPEVPEGEV) are disordered. The Ig-like 4 domain occupies 840-930 (PDFIKPLSDL…AACYAHLYVA (91 aa)). Residues Cys-861 and Cys-912 are joined by a disulfide bond. One can recognise a Fibronectin type-III 1 domain in the interval 937–1035 (PDGPPVIESV…TDLVQLVDRG (99 aa)). Residues 1135–1224 (PPIFETIMED…GSVSCKAELT (90 aa)) enclose the Ig-like 5 domain. The Protein kinase 1 domain occupies 1255 to 1505 (YDIHKEIGRG…ATECLLHPWF (251 aa)). ATP is bound by residues 1261-1269 (IGRGAFSYV) and Lys-1283. Asp-1372 serves as the catalytic Proton acceptor. Disordered stretches follow at residues 1559 to 1582 (VPRN…DIDE), 1776 to 1839 (RNFR…STGD), 2017 to 2058 (LKRL…TGLK), 2163 to 2189 (VHSR…VEKQ), 2211 to 2254 (SGIS…KMDI), and 2268 to 2322 (SKET…KEDF). Residues 1786–1795 (SGDSGTFNND) are compositionally biased toward polar residues. Over residues 2274-2284 (SSSSAHSIESS) the composition is skewed to low complexity. A compositionally biased stretch (basic and acidic residues) spans 2289 to 2299 (TEIRSRWDRWG). Residues 2323 to 2413 (PPVFHIALKD…ASVTTSCILT (91 aa)) enclose the Ig-like 6 domain. Cys-2345 and Cys-2397 form a disulfide bridge. Residues 2420–2513 (CPGTPEIRQI…DGVSIDTKVT (94 aa)) form the Fibronectin type-III 2 domain. Disordered regions lie at residues 2574-2609 (PKMS…YTAP) and 2648-2676 (GEGA…LRQG). 2 stretches are compositionally biased toward polar residues: residues 2587–2605 (SSVN…SPRS) and 2652–2674 (SSPT…TTLR). The 253-residue stretch at 2682-2934 (YSFLDEKARG…IKDCLNHSWL (253 aa)) folds into the Protein kinase 2 domain. ATP-binding positions include 2688-2696 (KARGRFGVI) and Lys-2711. Asp-2801 (proton acceptor) is an active-site residue.

This sequence belongs to the protein kinase superfamily. CAMK Ser/Thr protein kinase family. May be autophosphorylated. As to expression, preferentially expressed in striated muscle.

It localises to the nucleus. The catalysed reaction is L-seryl-[protein] + ATP = O-phospho-L-seryl-[protein] + ADP + H(+). The enzyme catalyses L-threonyl-[protein] + ATP = O-phospho-L-threonyl-[protein] + ADP + H(+). The chain is Striated muscle preferentially expressed protein kinase (speg) from Danio rerio (Zebrafish).